Consider the following 86-residue polypeptide: MANIKSQVKRIRTNEAARLRNQSVKSSLRTAIRSFREAAAAGDKDKANELLVSTSRKLDKAASKGVIHANQAANKKSALSQAANKL.

This sequence belongs to the bacterial ribosomal protein bS20 family.

Functionally, binds directly to 16S ribosomal RNA. This is Small ribosomal subunit protein bS20 from Rhodococcus erythropolis (strain PR4 / NBRC 100887).